The primary structure comprises 419 residues: Protein FAM217A (419 aa).

Disordered regions lie at residues 1 to 23, 100 to 119, 234 to 298, and 362 to 388; these read MGRK…QENL, DKRN…LSES, PSSS…SRSL, and PIPL…HRKS. The span at 7 to 23 shows a compositional bias: polar residues; it reads ESCSANPHSSSISQENL. Residues 284 to 298 show a composition bias toward polar residues; sequence SLSTAGKSKSNSRSL. A compositionally biased stretch (basic residues) spans 378–388; sequence PRTKKKCHRKS.

This sequence belongs to the FAM217 family.

The sequence is that of Protein FAM217A (Fam217a) from Rattus norvegicus (Rat).